Reading from the N-terminus, the 367-residue chain is Heme A synthase (367 aa).

Helical transmembrane passes span 25–45 (AIRI…LVGG), 111–131 (FLAR…VLTG), 137–157 (LWLP…IGWW), 174–194 (LATH…FMRA), and 211–231 (LAGL…LVAG). His274 lines the heme pocket. The next 3 helical transmembrane spans lie at 276 to 296 (LGAY…LRAA), 305 to 325 (SVVL…TLLL), and 327 to 347 (VPLH…GFAI). A heme-binding site is contributed by His335.

This sequence belongs to the COX15/CtaA family. Type 2 subfamily. In terms of assembly, interacts with CtaB. Requires heme b as cofactor.

Its subcellular location is the cell membrane. The enzyme catalyses Fe(II)-heme o + 2 A + H2O = Fe(II)-heme a + 2 AH2. Its pathway is porphyrin-containing compound metabolism; heme A biosynthesis; heme A from heme O: step 1/1. In terms of biological role, catalyzes the conversion of heme O to heme A by two successive hydroxylations of the methyl group at C8. The first hydroxylation forms heme I, the second hydroxylation results in an unstable dihydroxymethyl group, which spontaneously dehydrates, resulting in the formyl group of heme A. This Rhizobium rhizogenes (strain K84 / ATCC BAA-868) (Agrobacterium radiobacter) protein is Heme A synthase.